The sequence spans 235 residues: Large ribosomal subunit protein uL1 (235 aa).

The protein belongs to the universal ribosomal protein uL1 family. In terms of assembly, part of the 50S ribosomal subunit.

Its function is as follows. Binds directly to 23S rRNA. The L1 stalk is quite mobile in the ribosome, and is involved in E site tRNA release. Functionally, protein L1 is also a translational repressor protein, it controls the translation of the L11 operon by binding to its mRNA. The sequence is that of Large ribosomal subunit protein uL1 from Mycolicibacterium smegmatis (strain ATCC 700084 / mc(2)155) (Mycobacterium smegmatis).